We begin with the raw amino-acid sequence, 481 residues long: tRNA-guanine(15) transglycosylase (481 aa).

Asp87 (nucleophile) is an active-site residue. The substrate site is built by Asp122 and Ala191. Residues Cys273, Cys275, and Cys278 each contribute to the Zn(2+) site.

Belongs to the archaeosine tRNA-ribosyltransferase family. The cofactor is Zn(2+).

It carries out the reaction guanosine(15) in tRNA + 7-cyano-7-deazaguanine = 7-cyano-7-carbaguanosine(15) in tRNA + guanine. It functions in the pathway tRNA modification; archaeosine-tRNA biosynthesis. In terms of biological role, exchanges the guanine residue with 7-cyano-7-deazaguanine (preQ0) at position 15 in the dihydrouridine loop (D-loop) of archaeal tRNAs. This chain is tRNA-guanine(15) transglycosylase, found in Archaeoglobus fulgidus (strain ATCC 49558 / DSM 4304 / JCM 9628 / NBRC 100126 / VC-16).